An 860-amino-acid chain; its full sequence is GAS2-like protein 2 (860 aa).

Residues M1–R12 are compositionally biased toward basic residues. Residues M1 to R22 are disordered. The region spanning E32 to W159 is the Calponin-homology (CH) domain. The 73-residue stretch at C201–R273 folds into the GAR domain. Disordered regions lie at residues P281–S459, Q473–S574, T697–R743, K758–P781, and A801–V860. Polar residues predominate over residues G301–S316. A compositionally biased stretch (basic and acidic residues) spans P347–E364. Polar residues-rich tracts occupy residues K365 to S393 and Q473 to P485. The interval Q431–V860 is interaction with ADORA2A and GNAS. Positions N530 to T549 are enriched in basic and acidic residues. Residues R724 to K733 show a composition bias toward polar residues. A compositionally biased stretch (basic residues) spans K758–D768. Polar residues predominate over residues S828–E840.

The protein belongs to the GAS2 family. As to quaternary structure, interacts with ADORA2A (via its cytoplasmic C-terminal domain). Interacts with GNAS, GNAL, GNAQ, and GNA13. Interacts with MAPRE1. Expressed in tracheal epithelial cells (at protein level).

It is found in the cytoplasm. The protein localises to the cytoskeleton. Its subcellular location is the cell membrane. The protein resides in the stress fiber. It localises to the cilium basal body. Its function is as follows. Involved in the cross-linking of microtubules and microfilaments. Regulates microtubule dynamics and stability by interacting with microtubule plus-end tracking proteins, such as MAPRE1, to regulate microtubule growth along actin stress fibers. Enhances ADORA2-mediated adenylyl cyclase activation by acting as a scaffold to recruit trimeric G-protein complexes to ADORA2A. Regulates ciliary orientation and performance in cells located in the airway. The protein is GAS2-like protein 2 (Gas2l2) of Mus musculus (Mouse).